The sequence spans 108 residues: AFAGILADADIAAALAACKAEGSFKHGEYFAKIGLKGKSAADIKKVFGIIDQDKSDFVEEDELKLFLQNFSAGARALTDAETATFLKAGDSDGDGKIGVDEFAAMVKG.

Alanine 1 bears the N-acetylalanine mark. EF-hand domains follow at residues 38–73 (KSAA…FSAG) and 77–108 (LTDA…MVKG). Ca(2+) contacts are provided by aspartate 51, aspartate 53, serine 55, phenylalanine 57, glutamate 59, glutamate 62, aspartate 90, aspartate 92, aspartate 94, lysine 96, and glutamate 101.

The protein belongs to the parvalbumin family.

In muscle, parvalbumin is thought to be involved in relaxation after contraction. It binds two calcium ions. This Merluccius bilinearis (Silver hake) protein is Parvalbumin beta 2.